A 312-amino-acid polypeptide reads, in one-letter code: Olfactory receptor 7D2 (312 aa).

The Extracellular segment spans residues 1-25 (MEAGNQTGFLEFILLGLSEDPELQP). Residue Asn-5 is glycosylated (N-linked (GlcNAc...) asparagine). The helical transmembrane segment at 26–46 (FIFGLFLSMYLVTVLGNLLII) threads the bilayer. Residues 47–54 (LAISSDSH) are Cytoplasmic-facing. Residues 55–75 (LHTPMYFFLSNLSWVDICFST) form a helical membrane-spanning segment. At 76–99 (CIVPKMLVNIQTENKAISYMDCLT) the chain is on the extracellular side. Cys-97 and Cys-189 form a disulfide bridge. A helical transmembrane segment spans residues 100 to 120 (QVYFSMFFPILDTLLLTVMAY). Residues 121–139 (DRFVAVCHPLHYMIIMNPH) are Cytoplasmic-facing. A helical membrane pass occupies residues 140-160 (LCGLLVFVTWLIGVMTSLLHI). Residues 161–197 (SLMMHLIFCKDFEIPHFFCELTYILQLACSDTFLNST) are Extracellular-facing. Residues 198–217 (LIYFMTGVLGVFPLLGIIFS) form a helical membrane-spanning segment. Over 218-237 (YSRIASSIRKMSSSGGKQKA) the chain is Cytoplasmic. A helical transmembrane segment spans residues 238–258 (LSTCGSHLSVVSLFYGTGIGV). Residues 259–271 (HFTSAVTHSSQKI) are Extracellular-facing. The chain crosses the membrane as a helical span at residues 272–292 (SVASVMYTVVTPMLNPFIYSL). The Cytoplasmic portion of the chain corresponds to 293–312 (RNKDVKGALGSLLSRAASCL).

The protein belongs to the G-protein coupled receptor 1 family.

It localises to the cell membrane. In terms of biological role, odorant receptor. The protein is Olfactory receptor 7D2 (OR7D2) of Homo sapiens (Human).